A 299-amino-acid chain; its full sequence is Sulfotransferase 1B1 (299 aa).

48-53 lines the 3'-phosphoadenylyl sulfate pocket; it reads KSGTTW. 107 to 109 provides a ligand contact to substrate; the sequence is KTH. Histidine 109 (proton acceptor) is an active-site residue. 3'-phosphoadenylyl sulfate is bound by residues arginine 131, serine 139, tyrosine 194, 228–233, and 258–260; these read TSFEMM and RKG.

Belongs to the sulfotransferase 1 family. Liver specific.

It localises to the cytoplasm. The enzyme catalyses a phenol + 3'-phosphoadenylyl sulfate = an aryl sulfate + adenosine 3',5'-bisphosphate + H(+). It carries out the reaction 3,3',5-triiodo-L-thyronine + 3'-phosphoadenylyl sulfate = 3,3',5-triiodo-L-thyronine sulfate + adenosine 3',5'-bisphosphate + H(+). It catalyses the reaction 3,3',5'-triiodo-L-thyronine + 3'-phosphoadenylyl sulfate = 3,3',5'-triiodo-L-thyronine sulfate + adenosine 3',5'-bisphosphate + H(+). The catalysed reaction is 3,3'-diiodo-L-thyronine + 3'-phosphoadenylyl sulfate = 3,3'-diiodo-L-thyronine sulfate + adenosine 3',5'-bisphosphate + H(+). The enzyme catalyses dopamine + 3'-phosphoadenylyl sulfate = dopamine 3-O-sulfate + adenosine 3',5'-bisphosphate + H(+). It carries out the reaction dopamine + 3'-phosphoadenylyl sulfate = dopamine 4-O-sulfate + adenosine 3',5'-bisphosphate + H(+). It catalyses the reaction 4-ethylphenol + 3'-phosphoadenylyl sulfate = 4-ethylphenyl sulfate + adenosine 3',5'-bisphosphate + H(+). Its function is as follows. Sulfotransferase that utilizes 3'-phospho-5'-adenylyl sulfate (PAPS) as sulfonate donor to catalyze the sulfate conjugation of dopamine, small phenols such as 1-naphthol and p-nitrophenol and thyroid hormones, including 3,3'-diiodothyronine, triidothyronine (T3) and reverse triiodothyronine (rT3). May play a role in gut microbiota-host metabolic interaction. O-sulfonates 4-ethylphenol (4-EP), a dietary tyrosine-derived metabolite produced by gut bacteria. The product 4-EPS crosses the blood-brain barrier and may negatively regulate oligodendrocyte maturation and myelination, affecting the functional connectivity of different brain regions associated with the limbic system. This is Sulfotransferase 1B1 from Mus musculus (Mouse).